The primary structure comprises 430 residues: Tol-Pal system protein TolB (430 aa).

Residues 1–21 form the signal peptide; the sequence is MKQALRVAFGFLILWASVLHA.

The protein belongs to the TolB family. In terms of assembly, the Tol-Pal system is composed of five core proteins: the inner membrane proteins TolA, TolQ and TolR, the periplasmic protein TolB and the outer membrane protein Pal. They form a network linking the inner and outer membranes and the peptidoglycan layer.

The protein localises to the periplasm. In terms of biological role, part of the Tol-Pal system, which plays a role in outer membrane invagination during cell division and is important for maintaining outer membrane integrity. TolB occupies a key intermediary position in the Tol-Pal system because it communicates directly with both membrane-embedded components, Pal in the outer membrane and TolA in the inner membrane. The protein is Tol-Pal system protein TolB of Shigella boydii serotype 18 (strain CDC 3083-94 / BS512).